The following is a 548-amino-acid chain: Zinc metalloproteinase dpy-31 (548 aa).

The first 24 residues, 1-24 (MSLLRSASLLLVVVTAALPPCTLG), serve as a signal peptide directing secretion. A propeptide spanning residues 25 to 150 (YSLHDGSRLD…KTGQRRVKRK (126 aa)) is cleaved from the precursor. The region spanning 150 to 349 (KFIGSDLRRW…IRLMNKIYCS (200 aa)) is the Peptidase M12A domain. N-linked (GlcNAc...) asparagine glycosylation occurs at Asn190. 5 disulfide bridges follow: Cys193–Cys348, Cys216–Cys237, Cys352–Cys372, Cys374–Cys383, and Cys394–Cys422. Residue His245 coordinates Zn(2+). The active site involves Glu246. Zn(2+) contacts are provided by His249 and His255. Residues 344-384 (NKIYCSNVCSRKLPCQRGGYTDPRRCDRCRCPDGFTGQFCE) enclose the EGF-like domain. The 117-residue stretch at 394–510 (CGGRIQVNSG…RGFEARARAL (117 aa)) folds into the CUB domain. Residue Asn461 is glycosylated (N-linked (GlcNAc...) asparagine). One can recognise a TSP type-1 domain in the interval 513–547 (NGQWASWTPWTPCTASCGACGSRMRTRVCPHGACP). Cystine bridges form between Cys525–Cys546, Cys529–Cys546, and Cys541–Cys546.

Zn(2+) is required as a cofactor.

It is found in the secreted. In terms of biological role, metalloprotease which cleaves the carboxyl terminus of procollagens to mature collagens. Probably involved in cuticular collagen maturation. The sequence is that of Zinc metalloproteinase dpy-31 from Haemonchus contortus (Barber pole worm).